A 200-amino-acid polypeptide reads, in one-letter code: Probable GTP-binding protein EngB (200 aa).

The 174-residue stretch at 22 to 195 folds into the EngB-type G domain; that stretch reads GKDEIAFVGR…INNICSGINY (174 aa). Residues 30–37, 57–61, 75–78, 142–145, and 174–176 each bind GTP; these read GRSNVGKS, GKTRL, DLPG, TKSD, and FSS. Mg(2+)-binding residues include serine 37 and threonine 59.

This sequence belongs to the TRAFAC class TrmE-Era-EngA-EngB-Septin-like GTPase superfamily. EngB GTPase family. Mg(2+) serves as cofactor.

In terms of biological role, necessary for normal cell division and for the maintenance of normal septation. In Clostridium acetobutylicum (strain ATCC 824 / DSM 792 / JCM 1419 / IAM 19013 / LMG 5710 / NBRC 13948 / NRRL B-527 / VKM B-1787 / 2291 / W), this protein is Probable GTP-binding protein EngB.